The following is a 237-amino-acid chain: Ribosomal RNA small subunit methyltransferase G (237 aa).

S-adenosyl-L-methionine is bound by residues Gly-72, Leu-77, 123–124 (AE), and Arg-138. Residues 210 to 237 (TALETGTKAAPSRSPRKPGGRKKRGRKR) form a disordered region. The segment covering 223–237 (SPRKPGGRKKRGRKR) has biased composition (basic residues).

It belongs to the methyltransferase superfamily. RNA methyltransferase RsmG family.

The protein localises to the cytoplasm. Specifically methylates the N7 position of guanine in position 518 of 16S rRNA. In Thermobifida fusca (strain YX), this protein is Ribosomal RNA small subunit methyltransferase G.